Consider the following 281-residue polypeptide: 2,3,4,5-tetrahydropyridine-2,6-dicarboxylate N-succinyltransferase (281 aa).

2 residues coordinate substrate: Arg-108 and Asp-145.

It belongs to the transferase hexapeptide repeat family. In terms of assembly, homotrimer.

It is found in the cytoplasm. The enzyme catalyses (S)-2,3,4,5-tetrahydrodipicolinate + succinyl-CoA + H2O = (S)-2-succinylamino-6-oxoheptanedioate + CoA. The protein operates within amino-acid biosynthesis; L-lysine biosynthesis via DAP pathway; LL-2,6-diaminopimelate from (S)-tetrahydrodipicolinate (succinylase route): step 1/3. The protein is 2,3,4,5-tetrahydropyridine-2,6-dicarboxylate N-succinyltransferase of Nitrobacter winogradskyi (strain ATCC 25391 / DSM 10237 / CIP 104748 / NCIMB 11846 / Nb-255).